The following is a 757-amino-acid chain: Transcription factor FBD3 (757 aa).

The interval 1 to 24 is disordered; that stretch reads MSSKRLSQNEQEKSPGTGPPTHKR. Positions 31-58 form a DNA-binding region, zn(2)-C6 fungal-type; that stretch reads CNACRMRKSRCDGHRPSCSSCLSLGVNC. Disordered regions lie at residues 106 to 161 and 202 to 222; these read GGTD…DANT and VAPS…TDVP. Over residues 111–120 the composition is skewed to basic and acidic residues; that stretch reads NNHHNNHDSP. Polar residues predominate over residues 125–135; that stretch reads TIAQSITSSRP.

Its subcellular location is the nucleus. Transcription factor; part of the Fusarium detoxification of benzoxazolinone cluster involved in the degradation of benzoxazolinones produced by the host plant. Maize, wheat, and rye produce the 2 benzoxazinone phytoanticipins 2,4-dihy-droxy-7-methoxy-1,4-benzoxazin-3-one (DIMBOA) and 2,4-dihydroxy-1,4-benzoxazin-3-one (DIBOA) that, due to their inherent instability once released, spontaneously degrade to the more stable corresponding benzoxazolinones, 6-methoxy-2-benzoxazolinone (MBOA) and 2-benzoxazolinone (BOA), respectively. FDB3 controls the transcription of the FDB gene cluster in response to 6-methoxy-2-benzoxazolinone (MBOA). The sequence is that of Transcription factor FBD3 from Fusarium pseudograminearum (strain CS3096) (Wheat and barley crown-rot fungus).